We begin with the raw amino-acid sequence, 1171 residues long: 7,8-linoleate diol synthase (1171 aa).

A compositionally biased stretch (low complexity) spans 1–22 (MASSSSSGSSTRSSSPSDPPSS). The tract at residues 1–56 (MASSSSSGSSTRSSSPSDPPSSFFQKLGAFLGLFSKPQPPRPDYPHAPGNSAREEQ) is disordered. Residues 114 to 457 (TDGLITGLWE…DGSFEDEGLI (344 aa)) form a fatty acid alpha-dioxygenase region. Heme b is bound at residue His-213. Asp-214, Ser-229, Tyr-231, Asp-233, and Ser-235 together coordinate Ca(2+). Tyr-385 is an active-site residue. His-388 lines the heme b pocket. The epoxy alcohol synthase stretch occupies residues 675-1171 (KILNNQKDFK…PMNMKIRWDD (497 aa)). Residues 873-900 (GLANGGANGHANGNANGHTNGNGIHQNG) form a disordered region. A compositionally biased stretch (low complexity) spans 881-895 (GHANGNANGHTNGNG). Cys-1089 contributes to the heme binding site.

This sequence in the N-terminal section; belongs to the peroxidase family. In the C-terminal section; belongs to the cytochrome P450 family. Homotetramer. Requires heme b as cofactor. The cofactor is Ca(2+). It depends on heme as a cofactor.

The enzyme catalyses (9Z,12Z)-octadecadienoate + O2 = (8R,9Z,12Z)-8-hydroperoxyoctadeca-9,12-dienoate. It carries out the reaction (8R,9Z,12Z)-8-hydroperoxyoctadeca-9,12-dienoate = (7S,8S,9Z,12Z)-7,8-dihydroxyoctadeca-9,12-dienoate. In terms of biological role, 7,8-linoleate diol synthase is a bifunctional enzyme that converts linoleic acid (18:2n-6) into 8-hydroperoxy-8(E),12(Z)-octadecadienoic acid (8-HPODE) and then catalyzes the isomerization of the resulting hydroperoxide to 7,8-dihydroxy-9(Z),12(Z)-octadecadienoic acid (7,8-DiHODE). The polypeptide is 7,8-linoleate diol synthase (Pyricularia oryzae (strain 70-15 / ATCC MYA-4617 / FGSC 8958) (Rice blast fungus)).